Reading from the N-terminus, the 859-residue chain is Paladin (859 aa).

The disordered stretch occupies residues 1–34; sequence MGTTASTAQQTVSAGTSLEGLQGGSSSSMDSQHS. Residue glycine 2 is the site of N-myristoyl glycine attachment. Serine 89 is modified (phosphoserine).

The protein belongs to the paladin family. As to expression, vascular expression detected in the central nervous system, kidney, lung, heart, skeletal muscle, white adipose tissue (WAT), brown adipose tissue, liver, pancreas and spleen. Not expressed in all vessels: for instance, not expressed in capillaries in the brain, and expressed mainly in large vessels in the heart, WAT, liver, pancreas and kidney. Predominant nonvascular expression in myocardium and lung mesenchyme. In large vessels, primarily expressed by smooth muscle cells, but occasionally detected at low levels in the endothelium. Expressed in various cells of the hematopoietic lineage.

The protein localises to the cytoplasm. Its subcellular location is the cytosol. This is Paladin (Pald1) from Mus musculus (Mouse).